The sequence spans 151 residues: Transcriptional regulator MraZ (151 aa).

2 SpoVT-AbrB domains span residues 5-52 (ANAV…PLDE) and 81-124 (AVDL…DEDA).

The protein belongs to the MraZ family. Forms oligomers.

Its subcellular location is the cytoplasm. It localises to the nucleoid. This is Transcriptional regulator MraZ from Pseudomonas putida (strain ATCC 700007 / DSM 6899 / JCM 31910 / BCRC 17059 / LMG 24140 / F1).